We begin with the raw amino-acid sequence, 201 residues long: Putative 3-methyladenine DNA glycosylase (201 aa).

The protein belongs to the DNA glycosylase MPG family.

This Nitrosococcus oceani (strain ATCC 19707 / BCRC 17464 / JCM 30415 / NCIMB 11848 / C-107) protein is Putative 3-methyladenine DNA glycosylase.